We begin with the raw amino-acid sequence, 429 residues long: Trigger factor (429 aa).

The PPIase FKBP-type domain maps to 161–246; sequence GDRLSIDFKG…INEVALPKEP (86 aa).

This sequence belongs to the FKBP-type PPIase family. Tig subfamily.

Its subcellular location is the cytoplasm. It catalyses the reaction [protein]-peptidylproline (omega=180) = [protein]-peptidylproline (omega=0). Its function is as follows. Involved in protein export. Acts as a chaperone by maintaining the newly synthesized protein in an open conformation. Functions as a peptidyl-prolyl cis-trans isomerase. This is Trigger factor from Ruthia magnifica subsp. Calyptogena magnifica.